The chain runs to 447 residues: N-succinylarginine dihydrolase (447 aa).

Residues 19 to 28, Asn110, and 137 to 138 each bind substrate; these read AGLSFGNEAS and HR. Residue Glu174 is part of the active site. Arg212 provides a ligand contact to substrate. His248 is a catalytic residue. Substrate is bound by residues Asp250 and Asn359. The active-site Nucleophile is the Cys365.

It belongs to the succinylarginine dihydrolase family. In terms of assembly, homodimer.

It carries out the reaction N(2)-succinyl-L-arginine + 2 H2O + 2 H(+) = N(2)-succinyl-L-ornithine + 2 NH4(+) + CO2. It functions in the pathway amino-acid degradation; L-arginine degradation via AST pathway; L-glutamate and succinate from L-arginine: step 2/5. In terms of biological role, catalyzes the hydrolysis of N(2)-succinylarginine into N(2)-succinylornithine, ammonia and CO(2). The chain is N-succinylarginine dihydrolase from Escherichia coli O1:K1 / APEC.